A 209-amino-acid polypeptide reads, in one-letter code: MGKVYVFDHPLIQHKLTYIRDKNTGTKEFRELVEEVATLMAFEITRDLPLEEVEIETPVSKAKSKVIAGKKLGVIPILRAGIGMVDGILKLIPAAKVGHIGLYRDPETLKPVEYYVKLPTDVEERDFIVVDPMLATGGSAVEAINALKKRGAKSIKFMCLIAAPEGVEAVKKAHPDVDIYIAALDEKLNDHGYIVPGLGDAGDRLFGTK.

5-phospho-alpha-D-ribose 1-diphosphate-binding positions include arginine 79, arginine 104, and 131 to 139 (DPMLATGGS). Uracil contacts are provided by residues isoleucine 194 and 199-201 (GDA). Aspartate 200 lines the 5-phospho-alpha-D-ribose 1-diphosphate pocket.

The protein belongs to the UPRTase family. Mg(2+) serves as cofactor.

The catalysed reaction is UMP + diphosphate = 5-phospho-alpha-D-ribose 1-diphosphate + uracil. Its pathway is pyrimidine metabolism; UMP biosynthesis via salvage pathway; UMP from uracil: step 1/1. Its activity is regulated as follows. Allosterically activated by GTP. Functionally, catalyzes the conversion of uracil and 5-phospho-alpha-D-ribose 1-diphosphate (PRPP) to UMP and diphosphate. The sequence is that of Uracil phosphoribosyltransferase from Geobacillus sp. (strain WCH70).